A 129-amino-acid chain; its full sequence is Large ribosomal subunit protein bL17 (129 aa).

The protein belongs to the bacterial ribosomal protein bL17 family. In terms of assembly, part of the 50S ribosomal subunit. Contacts protein L32.

This is Large ribosomal subunit protein bL17 from Polynucleobacter asymbioticus (strain DSM 18221 / CIP 109841 / QLW-P1DMWA-1) (Polynucleobacter necessarius subsp. asymbioticus).